The primary structure comprises 611 residues: Elongation factor 4 1 (611 aa).

Residues 11 to 193 (QHIRNFSIVA…QIVHKIPAPQ (183 aa)) form the tr-type G domain. Residues 23 to 28 (DHGKST) and 140 to 143 (NKID) contribute to the GTP site.

Belongs to the TRAFAC class translation factor GTPase superfamily. Classic translation factor GTPase family. LepA subfamily.

The protein localises to the cell membrane. It catalyses the reaction GTP + H2O = GDP + phosphate + H(+). In terms of biological role, required for accurate and efficient protein synthesis under certain stress conditions. May act as a fidelity factor of the translation reaction, by catalyzing a one-codon backward translocation of tRNAs on improperly translocated ribosomes. Back-translocation proceeds from a post-translocation (POST) complex to a pre-translocation (PRE) complex, thus giving elongation factor G a second chance to translocate the tRNAs correctly. Binds to ribosomes in a GTP-dependent manner. This chain is Elongation factor 4 1, found in Lactiplantibacillus plantarum (strain ATCC BAA-793 / NCIMB 8826 / WCFS1) (Lactobacillus plantarum).